Here is a 1459-residue protein sequence, read N- to C-terminus: DNA-binding protein RFX7 (1459 aa).

Residues 1–27 form a disordered region; it reads MAEEQQQPPPQQLDAPQQLPLSAPNPG. A compositionally biased stretch (low complexity) spans 12 to 21; it reads QLDAPQQLPL. The segment at residues 108–183 is a DNA-binding region (RFX-type winged-helix); that stretch reads AFSWIRNTLE…YCYSGLRKKA (76 aa). The PxLPxI/L motif; mediates interaction with ANKRA2 and RFXANK signature appears at 188 to 193; sequence PTLPNL. 6 disordered regions span residues 303–347, 404–428, 482–590, 634–659, 688–716, and 918–1016; these read AKQQ…LPNG, SVKQTPKTPQNVPASPGGDRSARHR, PSNS…GVTE, FTSTSSPSNGDSVNKDPKICTKSPRK, GQKPGTVKKDQKVPHSGKTESSTAGAQIP, and SVTP…VPPS. Composition is skewed to polar residues over residues 404-416 and 482-502; these read SVKQTPKTPQNVP and PSNSNAPLKHSASVSSATGTT. The span at 521–534 shows a compositional bias: low complexity; sequence SPGSRASSTGGTSA. The segment covering 537 to 549 has biased composition (basic and acidic residues); it reads VKMEPEGSSDEHP. Composition is skewed to polar residues over residues 562 to 578, 634 to 645, and 706 to 716; these read PLTTSSALWGQKSNTDG, FTSTSSPSNGDS, and TESSTAGAQIP. Over residues 947 to 963 the composition is skewed to pro residues; the sequence is TPTPTPTPTPTPTPTPT. Positions 971-1009 are enriched in polar residues; that stretch reads GSQSLSRESPCSRLAQTTPVDSALGSSRHTPIGTPHSNC.

It belongs to the RFX family. In terms of assembly, interacts (via PxLPxI/L motif) with RFXANK (via ankyrin repeats). Interacts (via PxLPxI/L motif) with ANKRA2 (via ankyrin repeats). As to expression, expressed in spleen and lymph node and to a lower extend in brain (at protein level). Expressed in lymphoid organs and lymphoid cell subsets. Expressed throughout natural killer (NK) cell maturation.

The protein localises to the nucleus. Transcription factor. Acts as a transcriptional activator by binding to promoter regions of target genes, such as Rec8, Mxd4 and Ddit4. Plays a role in natural killer (NK) cell maintenance and immunity. May play a role in the process of ciliogenesis in the neural tube and neural tube closure. This Mus musculus (Mouse) protein is DNA-binding protein RFX7.